Consider the following 398-residue polypeptide: MKKIITDLDLNNKKVLMRVDFNVPMKDGKITDENRIVQALPTIKYVLEHNAKLILFSHLGKVKIEEDKATKSLKAVAEKLSELLGKNVTFIPETRGEKLESAINNLKSGEVLMFENTRFEDLDGKKESKNDSELGKYWASLGDVFVNDAFGTAHRAHASNVGIAENIGNGNSAVGFLVEKELKFIGEAVNNPKRPLIAILGGAKVSDKIGVIENLLTKADKILIGGAMMFTFLKAEGKNIGTSLVEDDKLDLAKDLLAKSNGKIVLPVDTVIASEFKNDIEFSTVDVDNIPNNKMGLDIGEKTVTLFDSYIKTAKTVVWNGPMGVFEMSNFAKGTIGVCESIANLTDAVTIIGGGDSAAAAISLGYADKFTHISTGGGASLEFLEGKVLPGVEAISNK.

Substrate contacts are provided by residues 20–22, Arg-35, 58–61, Arg-118, and Arg-155; these read DFN and HLGK. ATP-binding positions include Lys-208, Gly-296, Glu-327, and 354 to 357; that span reads GGDS.

The protein belongs to the phosphoglycerate kinase family. As to quaternary structure, monomer.

Its subcellular location is the cytoplasm. The enzyme catalyses (2R)-3-phosphoglycerate + ATP = (2R)-3-phospho-glyceroyl phosphate + ADP. Its pathway is carbohydrate degradation; glycolysis; pyruvate from D-glyceraldehyde 3-phosphate: step 2/5. In Fusobacterium nucleatum subsp. nucleatum (strain ATCC 25586 / DSM 15643 / BCRC 10681 / CIP 101130 / JCM 8532 / KCTC 2640 / LMG 13131 / VPI 4355), this protein is Phosphoglycerate kinase.